The sequence spans 226 residues: 2,3-bisphosphoglycerate-dependent phosphoglycerate mutase (226 aa).

Substrate-binding positions include 8–15, 21–22, Arg58, 109–112, Lys120, 136–137, and 180–181; these read RHGQSVWN, TG, ERMY, RR, and GN. Catalysis depends on His9, which acts as the Tele-phosphohistidine intermediate. Catalysis depends on Glu109, which acts as the Proton donor/acceptor.

It belongs to the phosphoglycerate mutase family. BPG-dependent PGAM subfamily.

The catalysed reaction is (2R)-2-phosphoglycerate = (2R)-3-phosphoglycerate. Its pathway is carbohydrate degradation; glycolysis; pyruvate from D-glyceraldehyde 3-phosphate: step 3/5. In terms of biological role, catalyzes the interconversion of 2-phosphoglycerate and 3-phosphoglycerate. The chain is 2,3-bisphosphoglycerate-dependent phosphoglycerate mutase from Chlamydia trachomatis serovar L2 (strain ATCC VR-902B / DSM 19102 / 434/Bu).